A 142-amino-acid polypeptide reads, in one-letter code: Type II secretion system core protein G (142 aa).

A propeptide spans 1 to 8 (MQRRQQSG) (leader sequence). N-methylphenylalanine is present on F9. The chain crosses the membrane as a helical span at residues 9-29 (FTLIEIMVVVVILGILAALVV). The segment at 121 to 142 (SLGADGKEGGSDNDADIGNWDN) is disordered.

The protein belongs to the GSP G family. As to quaternary structure, type II secretion system is composed of four main components: the outer membrane complex, the inner membrane complex, the cytoplasmic secretion ATPase and the periplasm-spanning pseudopilus. Forms homomultimers. Interacts with pseudopilin tip ternary complex made of XcpX, XcpU, XcpV and XcpW. Interacts with PilA. Post-translationally, cleaved by the prepilin peptidase. Methylated by prepilin peptidase at the amino group of the N-terminal phenylalanine once the leader sequence is cleaved.

It is found in the cell inner membrane. Its function is as follows. Core component of the type II secretion system required for the energy-dependent secretion of extracellular factors such as proteases and toxins from the periplasm. Pseudopilin (pilin-like) protein that polymerizes to form the pseudopilus. Further polymerization triggers pseudopilus growth. Type II pseudopilus confers increased bacterial adhesive capabilities. The sequence is that of Type II secretion system core protein G (xcpT) from Pseudomonas aeruginosa (strain ATCC 15692 / DSM 22644 / CIP 104116 / JCM 14847 / LMG 12228 / 1C / PRS 101 / PAO1).